The chain runs to 310 residues: RING-H2 finger protein ATL60 (310 aa).

A helical membrane pass occupies residues 24-44 (VLLFSIVSIFTGILFLLLLHL). The segment at 120–162 (CAVCLSDLVDGDKARVLPRCNHGFHVDCIDMWFQSHSTCPLCR) adopts an RING-type; atypical zinc-finger fold. 2 disordered regions span residues 170–201 (DTTH…QDQS) and 240–260 (GNFA…RSQE). Residues 179–201 (LPQNQNFESGHSTNQHNPSQDQS) show a composition bias toward polar residues.

It belongs to the RING-type zinc finger family. ATL subfamily.

The protein localises to the membrane. It catalyses the reaction S-ubiquitinyl-[E2 ubiquitin-conjugating enzyme]-L-cysteine + [acceptor protein]-L-lysine = [E2 ubiquitin-conjugating enzyme]-L-cysteine + N(6)-ubiquitinyl-[acceptor protein]-L-lysine.. It functions in the pathway protein modification; protein ubiquitination. This Arabidopsis thaliana (Mouse-ear cress) protein is RING-H2 finger protein ATL60 (ATL60).